Here is a 163-residue protein sequence, read N- to C-terminus: Interleukin-31 (163 aa).

Residues 1–23 (MIFHTGTTKPTLVLLCCIGTWLA) form the signal peptide. Residues Asn-55, Asn-84, and Asn-124 are each glycosylated (N-linked (GlcNAc...) asparagine).

Its subcellular location is the secreted. Its function is as follows. Activates STAT3 and possibly STAT1 and STAT5 through the IL31 heterodimeric receptor composed of IL31RA and OSMR. May function in skin immunity. Enhances myeloid progenitor cell survival in vitro. Induces RETNLA and serum amyloid A protein expression in macrophages. This chain is Interleukin-31 (Il31), found in Mus musculus (Mouse).